A 76-amino-acid chain; its full sequence is Acyl carrier protein (76 aa).

Residues 1-76 (MSIEERVKKI…SAIDYVQNNQ (76 aa)) enclose the Carrier domain. Serine 36 bears the O-(pantetheine 4'-phosphoryl)serine mark.

The protein belongs to the acyl carrier protein (ACP) family. 4'-phosphopantetheine is transferred from CoA to a specific serine of apo-ACP by AcpS. This modification is essential for activity because fatty acids are bound in thioester linkage to the sulfhydryl of the prosthetic group.

The protein localises to the cytoplasm. It functions in the pathway lipid metabolism; fatty acid biosynthesis. Its function is as follows. Carrier of the growing fatty acid chain in fatty acid biosynthesis. The sequence is that of Acyl carrier protein from Pasteurella multocida (strain Pm70).